A 126-amino-acid polypeptide reads, in one-letter code: Protein VraC (126 aa).

The chain is Protein VraC from Staphylococcus haemolyticus (strain JCSC1435).